Reading from the N-terminus, the 278-residue chain is Putative cuticle collagen 91 (278 aa).

Disordered stretches follow at residues 84-109 (LAKN…GVDG) and 140-278 (GPAG…SVRQ). Residues 89–98 (PPGPPGPPGA) show a composition bias toward pro residues. Triple-helical region regions lie at residues 91-120 (GPPG…DGVA), 137-199 (GEAG…NGQR), and 202-264 (GTPG…PGPD). Low complexity predominate over residues 99 to 109 (PGAAGEPGVDG). Gly residues predominate over residues 158-167 (GADGQGGAPG). Composition is skewed to low complexity over residues 172-228 (EGPA…AGAP) and 236-245 (APGVDGQPGA).

The protein belongs to the cuticular collagen family. In terms of assembly, collagen polypeptide chains are complexed within the cuticle by disulfide bonds and other types of covalent cross-links.

In terms of biological role, nematode cuticles are composed largely of collagen-like proteins. The cuticle functions both as an exoskeleton and as a barrier to protect the worm from its environment. The chain is Putative cuticle collagen 91 (col-91) from Caenorhabditis elegans.